We begin with the raw amino-acid sequence, 681 residues long: Sterile alpha motif domain-containing protein 11 (681 aa).

Disordered regions lie at residues 41–77, 212–234, 251–307, and 407–498; these read RNLK…EDGP, YHLG…HLPS, GPSG…APHV, and LLAL…GAEG. Lys72 is covalently cross-linked (Glycyl lysine isopeptide (Lys-Gly) (interchain with G-Cter in SUMO2)). The segment covering 219-234 has biased composition (basic and acidic residues); that stretch reads HGEDPPWHDPPHHLPS. Pro residues predominate over residues 412-423; that stretch reads PQGPPGSGPPTP. Residue Thr485 is modified to Phosphothreonine. Positions 543–608 constitute an SAM domain; it reads WTVDDVCSFV…AQVARRLGRV (66 aa). The segment at 625–681 is disordered; it reads LRAPERELGTGEQPLSPTTATSPYGGGHALAGQTSPKQENGTLALLPGAPDPSQPLC. Composition is skewed to polar residues over residues 637 to 646 and 656 to 665; these read QPLSPTTATS and GQTSPKQENG. Ser640 carries the post-translational modification Phosphoserine.

As to quaternary structure, self-associates. Component of a Polycomb group (PcG) multiprotein PRC1-like complex. Interacts with SAMD7 and PHC2. Expressed in the outer and inner nuclear layers, ganglion cell layer and rod photoreceptors of the retina (at protein level). Widely expressed, showing the highest expression in kidney, prostate and retina.

Its subcellular location is the nucleus. Functionally, component of a Polycomb group (PcG) multiprotein PRC1-like complex, essential for establishing rod photoreceptor cell identity and function by silencing nonrod gene expression in developing rod photoreceptor cells. The protein is Sterile alpha motif domain-containing protein 11 (SAMD11) of Homo sapiens (Human).